Reading from the N-terminus, the 600-residue chain is Transcription factor rlmA (600 aa).

One can recognise an MADS-box domain in the interval 1-61; sequence MGRRKIEIKA…KKLYEFSSCD (61 aa). 2 disordered regions span residues 71–518 and 544–600; these read YYGP…NIET and GFGR…KSKT. Residues 75-89 are compositionally biased toward basic and acidic residues; that stretch reads PHEHKGPEDFNGKRD. Over residues 151–160 the composition is skewed to polar residues; sequence PQPQGASRPS. Over residues 222-242 the composition is skewed to pro residues; it reads QPLPPHAIPPHPMPQPVPPHH. Low complexity predominate over residues 243–260; the sequence is QAPQHLPQHPHPLAQQTP. Over residues 328 to 339 the composition is skewed to polar residues; sequence HQRSLSSKSRSI. The segment covering 364–384 has biased composition (basic and acidic residues); it reads PRTESADVKAEAKQNDSKEIK. Positions 386–397 are enriched in pro residues; the sequence is PAQPVAPPPPPR. The segment covering 440-452 has biased composition (low complexity); the sequence is RGSATADSSSSTG. Positions 453-468 are enriched in polar residues; the sequence is NQTVTPAKANPDTNHS. Positions 490–501 are enriched in pro residues; sequence PPNPFARPPPPG. A compositionally biased stretch (low complexity) spans 503–515; it reads ASQNSNAYNSNNN.

This sequence belongs to the MEF2 family. In terms of assembly, interacts with hsp90. In terms of processing, phosphorylation during asexual development.

The protein localises to the nucleus. Functionally, transcription factor; part of cell wall integrity (CWI) signaling pathway composed of pkcA, the bck1-mkk2-mpka MAPK cascade and the downstream rlmA transcription regulator. The CWI signaling pathway regulates cell wall integrity and pyomelanin formation. CWI also controls oxidative stress response, gliotoxin production, iron adaptation and asexual development. Finally, CWI is constitutively required for A.fumigatus to cope with the temperature increase found in the mammalian lung environment, during infection. Positively regulates the phosphorylation of mpkA. Involved in tolerance to oxidative damage and transcriptional regulation of genes related to oxidative stress adaptation. Directly regulates the expression of regulators of conidiation, including flbB, flbC, brlA, abaA, and rasB, as well as genes involved in cell wall synthesis and remodeling. Specifically associates with the target fumiquinazoline (fmq) cluster genes promoters at conserved motifs (5'-TAWWWWTA-3') during conidiation to supplement mature conidia with fumiquinazoline C. Also controls the DHN-melanin production via binding the promoter of pksP. In Aspergillus fumigatus (strain ATCC MYA-4609 / CBS 101355 / FGSC A1100 / Af293) (Neosartorya fumigata), this protein is Transcription factor rlmA.